The primary structure comprises 829 residues: Pre-mRNA-splicing factor syf1 (829 aa).

HAT repeat units follow at residues 15-47, 49-81, 93-125, 127-161, 163-182, 277-312, 380-418, 420-456, 473-505, 544-578, 581-615, and 689-723; these read SLVSEEDFPYEQDIVRNPGSTKPWLAYIEYKLQ, GTVQEQAYIMERACVQLPRSYKLWKMYLRFRTK, SEYQKVNSLFERALILLNKMPRIWEMYLKFLMQ, PLVTHTRRTFDRALRALPITQHNRIWALYRPFANS, EGETAVKIWRRYMQVHPEDA, GSFERARDVFEEGITTVMTVRDFTLVFDSYTEFEES, DNKEEVVKTYLDAIEAIQPKKAVGALHQLWTNYAKFYEA, GDLSSARRIMEKAVKVPYKSVAELADMWIEWAEMELR, APKRSTVDYFDETLSPQQRVHKSWKLWSFYVDL, KYFEESFKIYERGLDLFSYPVAFELWNLYLTKAVD, ISIERLRDLFEQAVEDCPPKFAKVIYLMYGNLEEE, and GEIDRARAIYGHASQFCDPRTNPGFWTKWDQFEVQ. The disordered stretch occupies residues 799 to 829; sequence AASEGPKGGSMPVQPVEVHNPDAIDLDEMDE.

This sequence belongs to the crooked-neck family. In terms of assembly, associated with the spliceosome.

It localises to the nucleus. Involved in pre-mRNA splicing and cell cycle progression. In Neurospora crassa (strain ATCC 24698 / 74-OR23-1A / CBS 708.71 / DSM 1257 / FGSC 987), this protein is Pre-mRNA-splicing factor syf1 (msp-41).